The primary structure comprises 209 residues: Thymidylate kinase (209 aa).

Residue 11 to 18 (GIEGAGKT) participates in ATP binding.

The protein belongs to the thymidylate kinase family.

The enzyme catalyses dTMP + ATP = dTDP + ADP. Functionally, phosphorylation of dTMP to form dTDP in both de novo and salvage pathways of dTTP synthesis. This Pasteurella multocida (strain Pm70) protein is Thymidylate kinase (tmk).